Consider the following 121-residue polypeptide: Two-component response regulator ORR12 (121 aa).

The Response regulatory domain maps to 5–121 (HVLVVDDTLV…VDLPRILNYI (117 aa)). At aspartate 55 the chain carries 4-aspartylphosphate.

This sequence belongs to the ARR family. Type-A subfamily. Two-component system major event consists of a His-to-Asp phosphorelay between a sensor histidine kinase (HK) and a response regulator (RR). In plants, the His-to-Asp phosphorelay involves an additional intermediate named Histidine-containing phosphotransfer protein (HPt). This multistep phosphorelay consists of a His-Asp-His-Asp sequential transfer of a phosphate group between first a His and an Asp of the HK protein, followed by the transfer to a conserved His of the HPt protein and finally the transfer to an Asp in the receiver domain of the RR protein. As to expression, expressed in flowers and panicles.

Functionally, functions as a response regulator involved in His-to-Asp phosphorelay signal transduction system. Phosphorylation of the Asp residue in the receiver domain activates the ability of the protein to promote the transcription of target genes. Type-A response regulators seem to act as negative regulators of the cytokinin signaling. This is Two-component response regulator ORR12 from Oryza sativa subsp. japonica (Rice).